The sequence spans 528 residues: Tyrosine 3-monooxygenase (528 aa).

A Phosphoserine; by CaMK2 modification is found at Ser19. The tract at residues 33-65 is disordered; the sequence is GQGAPGPSLTGSPWPGTAAPAASYTPTPRSPRF. The segment covering 47–59 has biased composition (low complexity); sequence PGTAAPAASYTPT. Phosphoserine is present on Ser62. Ser71 carries the phosphoserine; by CaMK2 and PKA modification. Fe cation contacts are provided by His361, His366, and Glu406. Ser502 carries the phosphoserine modification.

Belongs to the biopterin-dependent aromatic amino acid hydroxylase family. Homotetramer. Interacts (when phosphorylated at Ser-19) with YWHAG; one YWHAG dimer binds to one TH tetramer and this interaction may influence the phosphorylation and dephosphorylation of other sites. Interacts with NT5DC2; the interaction results in reduced phosphorylation and decreased catalytic activity of TH. Fe(2+) is required as a cofactor. Post-translationally, phosphorylated on Ser-19, Ser-62 and Ser-71 by several protein kinases with different site specificities. Phosphorylation at Ser-62 and Ser-71 leads to an increase of TH activity. Phosphorylation at Ser-71 activates the enzyme and also counteracts the feedback inhibition of TH by catecholamines. Phosphorylation of Ser-19 and Ser-62 triggers the proteasomal degradation of TH through the ubiquitin-proteasome pathway. Phosphorylation at Ser-62 facilitates transport of TH from the soma to the nerve terminals via the microtubule network. Phosphorylation at Ser-19 induces the high-affinity binding to the 14-3-3 protein YWHAG; this interaction may influence the phosphorylation and dephosphorylation of other sites. Ser-19 increases the phosphorylation at Ser-71 in a hierarchical manner, leading to increased activity. As to expression, mainly expressed in the brain and adrenal glands.

The protein localises to the cytoplasm. Its subcellular location is the perinuclear region. The protein resides in the nucleus. It is found in the cell projection. It localises to the axon. The protein localises to the cytoplasmic vesicle. Its subcellular location is the secretory vesicle. The protein resides in the synaptic vesicle. The enzyme catalyses (6R)-L-erythro-5,6,7,8-tetrahydrobiopterin + L-tyrosine + O2 = (4aS,6R)-4a-hydroxy-L-erythro-5,6,7,8-tetrahydrobiopterin + L-dopa. It participates in catecholamine biosynthesis; dopamine biosynthesis; dopamine from L-tyrosine: step 1/2. Its activity is regulated as follows. Inhibited in feedback fashion by the catecholamine neurotransmitters, especially by dopamine in competition with tetrahydrobiopterin. Phosphorylation of several Ser/Thr residues in the N-terminus regulates the catalytic activity. Ser-62 and Ser-71 are readily phosphorylated to activate the catalytic activity. A Cysteine modification induced by N-ethylmaleimide (NEM), inhibits tyrosine 3-monooxygenase activity through the modification of the Cys-207. Its function is as follows. Catalyzes the conversion of L-tyrosine to L-dihydroxyphenylalanine (L-Dopa), the rate-limiting step in the biosynthesis of catecholamines, dopamine, noradrenaline, and adrenaline. Uses tetrahydrobiopterin and molecular oxygen to convert tyrosine to L-Dopa. In addition to tyrosine, is able to catalyze the hydroxylation of phenylalanine and tryptophan with lower specificity. Positively regulates the regression of retinal hyaloid vessels during postnatal development. Lacks catalytic activity. This is Tyrosine 3-monooxygenase from Homo sapiens (Human).